We begin with the raw amino-acid sequence, 316 residues long: Ribosomal protein L11 methyltransferase (316 aa).

The S-adenosyl-L-methionine site is built by T157, G178, D200, and N243.

This sequence belongs to the methyltransferase superfamily. PrmA family.

The protein resides in the cytoplasm. The catalysed reaction is L-lysyl-[protein] + 3 S-adenosyl-L-methionine = N(6),N(6),N(6)-trimethyl-L-lysyl-[protein] + 3 S-adenosyl-L-homocysteine + 3 H(+). Functionally, methylates ribosomal protein L11. This chain is Ribosomal protein L11 methyltransferase, found in Streptococcus pneumoniae serotype 4 (strain ATCC BAA-334 / TIGR4).